We begin with the raw amino-acid sequence, 381 residues long: Subtilisin NAT (381 aa).

The signal sequence occupies residues 1–29 (MRSKKLWISLLFALTLIFTMAFSNMSAQA). The propeptide occupies 30 to 106 (AGKSSTEKKY…VEEDHIAHEY (77 aa)). The Inhibitor I9 domain maps to 38-103 (KYIVGFKQTM…VAYVEEDHIA (66 aa)). The Peptidase S8 domain occupies 111-380 (PYGISQIKAP…KGLINVQAAA (270 aa)). The active-site Charge relay system is the Asp138. Position 147 (Asp147) interacts with Ca(2+). The active-site Charge relay system is His170. Ca(2+)-binding residues include Leu181, Asn183, Ile185, Val187, Ala275, Tyr277, Thr280, and Asp303. Ser327 (charge relay system) is an active-site residue.

This sequence belongs to the peptidase S8 family. In terms of assembly, monomer. It depends on Ca(2+) as a cofactor.

It is found in the secreted. The catalysed reaction is Hydrolysis of proteins with broad specificity for peptide bonds, and a preference for a large uncharged residue in P1. Hydrolyzes peptide amides.. Inhibited by PMSF (phenylmethylsulfonyl fluoride). Its function is as follows. Subtilisin is an extracellular alkaline serine protease, it catalyzes the hydrolysis of proteins and peptide amides. Subtilisin NAT also has fibrinolytic activity. This Bacillus subtilis subsp. natto protein is Subtilisin NAT.